The following is a 232-amino-acid chain: MAKLSKRAAAIAKKIDRTKLYPVSEALTLVKETATAKFDESIDVAVQLGIDPKKSDQLVRGSVVLPAGTGKSVRVAVFAQGDKAEAARAAGADIVGLDDLAERIKGGQIDFDVVIASPDTMRVVGALGQVLGPRGLMPNPKVGTVTPDVATAVKNAKAGQVQYRTDKAGIIHATIGRASFGVEQLQTNLAALVDALQKARPAAAKGIYLRKLAVSSTMGGGARIEVASLSAN.

This sequence belongs to the universal ribosomal protein uL1 family. In terms of assembly, part of the 50S ribosomal subunit.

In terms of biological role, binds directly to 23S rRNA. The L1 stalk is quite mobile in the ribosome, and is involved in E site tRNA release. Its function is as follows. Protein L1 is also a translational repressor protein, it controls the translation of the L11 operon by binding to its mRNA. This Bordetella petrii (strain ATCC BAA-461 / DSM 12804 / CCUG 43448) protein is Large ribosomal subunit protein uL1.